The sequence spans 491 residues: Blue-light-activated histidine kinase (491 aa).

The region spanning 19-92 (EANPFTAAVE…EIIHSALEAE (74 aa)) is the PAS 1 domain. At Cys69 the chain carries S-4a-FMN cysteine. In terms of domain architecture, PAC spans 93 to 147 (QSVEIDILNYKKSGEPFWNRLHISPVKTENGELHHFVSSQLDVTLELGKLVELEK). The PAS 2 domain maps to 159–230 (SSDQLQYIVE…QRSQESFATG (72 aa)). Residues 286-368 (EISHRFKNSM…GHRIRTSGPE (83 aa)) form an HWE histidine kinase domain region. A Phosphohistidine; by autocatalysis modification is found at His289.

Post-translationally, FMN binds covalently to cysteine after exposure to blue light and this bond is spontaneously broken in the dark.

The enzyme catalyses ATP + protein L-histidine = ADP + protein N-phospho-L-histidine.. Photosensitive kinase that is involved in increased bacterial virulence upon exposure to light. The protein is Blue-light-activated histidine kinase of Brucella anthropi (strain ATCC 49188 / DSM 6882 / CCUG 24695 / JCM 21032 / LMG 3331 / NBRC 15819 / NCTC 12168 / Alc 37) (Ochrobactrum anthropi).